We begin with the raw amino-acid sequence, 518 residues long: MDVNILTMFVTVSALALACSLWIASYLRNWRKKGVYPPVVGTMLNHAINFERLHDYHTDQAQRYKTFRVVYPTCSYVFTTDPVNVEHILKTNFANYDKGTFNYDIMKDLLGDGIFNVDGDKWRQQRKLASSEFASKVLKDFSSGVFCNNAAKLANILAQAAKLNLSVEMQDLFMRSSLDSICKVVFGIDINSLSSSKAESGPEASFAKAFDVANAMVFHRHMVGSFWKVQRFFNVGSEAILRDNIKMVDDFLYKVIHFRRQEMFSAEKENVRPDILSRYIIISDKETDGKVSDKYLRDVILNFMVAARDTTAIALSWFIYMLCKHQHVQEKLLEEIISSTSVHEDQYSTECNDIASFAQSLTDEALGKMHYLHASLSETLRLYPALPVDGKYVVNEDTLPDGFKVKKGDSVNFLPYAMGRMSYLWGDDAKEFKPERWIQDGIFHPKSPFKFPAFQAGPRTCLGKDFAYLQMKIVAAVLVRFFKFEAVKTKEVRYRTMLTLHMNEDGLNVQVTPRLNSD.

2 helical membrane passes run I5–S25 and V299–I319. C461 is a binding site for heme.

This sequence belongs to the cytochrome P450 family. Requires heme as cofactor.

It localises to the membrane. The sequence is that of Cytochrome P450 704C1 (CYP704C1) from Pinus taeda (Loblolly pine).